The primary structure comprises 303 residues: Probable cell division protein WhiA (303 aa).

A DNA-binding region (H-T-H motif) is located at residues 272 to 303; it reads SIQQLADSLSTPLTKSGVNHRLRKINKIADEL.

The protein belongs to the WhiA family.

Functionally, involved in cell division and chromosome segregation. The sequence is that of Probable cell division protein WhiA from Streptococcus pneumoniae (strain Hungary19A-6).